A 183-amino-acid chain; its full sequence is UPF0098 protein YbcL (183 aa).

The N-terminal stretch at 1–21 is a signal peptide; that stretch reads MKTLIVSTVLAFITFSAQAAA. C46 and C129 are joined by a disulfide.

The protein belongs to the UPF0098 family. Homodimer.

Its subcellular location is the periplasm. The chain is UPF0098 protein YbcL (ybcL) from Escherichia coli (strain K12).